Consider the following 837-residue polypeptide: Protein translocase subunit SecA (837 aa).

Residues Gln85, 103 to 107 (GEGKT), and Asp493 each bind ATP. Positions 821, 823, 832, and 833 each coordinate Zn(2+).

This sequence belongs to the SecA family. Monomer and homodimer. Part of the essential Sec protein translocation apparatus which comprises SecA, SecYEG and auxiliary proteins SecDF. Other proteins may also be involved. The cofactor is Zn(2+).

It localises to the cell membrane. The protein localises to the cytoplasm. The enzyme catalyses ATP + H2O + cellular proteinSide 1 = ADP + phosphate + cellular proteinSide 2.. Its function is as follows. Part of the Sec protein translocase complex. Interacts with the SecYEG preprotein conducting channel. Has a central role in coupling the hydrolysis of ATP to the transfer of proteins into and across the cell membrane, serving as an ATP-driven molecular motor driving the stepwise translocation of polypeptide chains across the membrane. The chain is Protein translocase subunit SecA from Streptococcus pneumoniae (strain P1031).